We begin with the raw amino-acid sequence, 469 residues long: 3-isopropylmalate dehydratase large subunit (469 aa).

Residues cysteine 349, cysteine 410, and cysteine 413 each coordinate [4Fe-4S] cluster.

Belongs to the aconitase/IPM isomerase family. LeuC type 1 subfamily. Heterodimer of LeuC and LeuD. It depends on [4Fe-4S] cluster as a cofactor.

The enzyme catalyses (2R,3S)-3-isopropylmalate = (2S)-2-isopropylmalate. Its pathway is amino-acid biosynthesis; L-leucine biosynthesis; L-leucine from 3-methyl-2-oxobutanoate: step 2/4. Catalyzes the isomerization between 2-isopropylmalate and 3-isopropylmalate, via the formation of 2-isopropylmaleate. The chain is 3-isopropylmalate dehydratase large subunit from Neisseria meningitidis serogroup A / serotype 4A (strain DSM 15465 / Z2491).